A 295-amino-acid chain; its full sequence is Acetyl-coenzyme A carboxylase carboxyl transferase subunit beta (295 aa).

Positions Met-1–Lys-20 are disordered. The 268-residue stretch at Leu-28–Ala-295 folds into the CoA carboxyltransferase N-terminal domain. Cys-32, Cys-35, Cys-51, and Cys-54 together coordinate Zn(2+). Residues Cys-32–Cys-54 form a C4-type zinc finger.

The protein belongs to the AccD/PCCB family. Acetyl-CoA carboxylase is a heterohexamer composed of biotin carboxyl carrier protein (AccB), biotin carboxylase (AccC) and two subunits each of ACCase subunit alpha (AccA) and ACCase subunit beta (AccD). Zn(2+) serves as cofactor.

Its subcellular location is the cytoplasm. It catalyses the reaction N(6)-carboxybiotinyl-L-lysyl-[protein] + acetyl-CoA = N(6)-biotinyl-L-lysyl-[protein] + malonyl-CoA. Its pathway is lipid metabolism; malonyl-CoA biosynthesis; malonyl-CoA from acetyl-CoA: step 1/1. In terms of biological role, component of the acetyl coenzyme A carboxylase (ACC) complex. Biotin carboxylase (BC) catalyzes the carboxylation of biotin on its carrier protein (BCCP) and then the CO(2) group is transferred by the transcarboxylase to acetyl-CoA to form malonyl-CoA. The chain is Acetyl-coenzyme A carboxylase carboxyl transferase subunit beta from Xanthomonas campestris pv. campestris (strain 8004).